Reading from the N-terminus, the 101-residue chain is ATP-dependent Clp protease adapter protein ClpS (101 aa).

Residues Met-1–Thr-24 form a disordered region. Residues Val-13 to Ala-23 show a composition bias toward polar residues.

This sequence belongs to the ClpS family. In terms of assembly, binds to the N-terminal domain of the chaperone ClpA.

In terms of biological role, involved in the modulation of the specificity of the ClpAP-mediated ATP-dependent protein degradation. The sequence is that of ATP-dependent Clp protease adapter protein ClpS from Mycobacterium marinum (strain ATCC BAA-535 / M).